The chain runs to 798 residues: Cation channel sperm-associated auxiliary subunit delta (798 aa).

Residues 1-20 form the signal peptide; the sequence is MLMLMLVAAVTMWLRPLVTA. The Extracellular portion of the chain corresponds to 21-723; sequence QLCRSRTVRT…AFPVQLVSAG (703 aa). Cystine bridges form between cysteine 23–cysteine 369, cysteine 59–cysteine 145, cysteine 144–cysteine 152, cysteine 387–cysteine 496, cysteine 510–cysteine 701, cysteine 525–cysteine 572, and cysteine 624–cysteine 652. Asparagine 123 carries an N-linked (GlcNAc...) asparagine glycan. N-linked (GlcNAc...) asparagine glycans are attached at residues asparagine 230, asparagine 240, asparagine 472, asparagine 538, and asparagine 630. A helical membrane pass occupies residues 724 to 745; it reads VVILLIISSILGSVWLAYKTPK. At 746–798 the chain is on the cytoplasmic side; it reads LLRTARGRRIKKCATQLCRRCKTVCQFRASATARAGTEPPGRHRTPHGGRSDH.

The protein belongs to the CATSPERD family. As to quaternary structure, component of the CatSper complex or CatSpermasome composed of the core pore-forming members CATSPER1, CATSPER2, CATSPER3 and CATSPER4 as well as auxiliary members CATSPERB, CATSPERG, CATSPERD, CATSPERE, CATSPERZ, C2CD6/CATSPERT, TMEM249, TMEM262 and EFCAB9. HSPA1 may be an additional auxiliary complex member. The core complex members CATSPER1, CATSPER2, CATSPER3 and CATSPER4 form a heterotetrameric channel. The auxiliary CATSPERB, CATSPERG, CATSPERD and CATSPERE subunits form a pavilion-like structure over the pore which stabilizes the complex through interactions with CATSPER4, CATSPER3, CATSPER1 and CATSPER2 respectively. TMEM262/CATSPERH interacts with CATSPERB, further stabilizing the complex. C2CD6/CATSPERT interacts at least with CATSPERD and is required for targeting the CatSper complex in the flagellar membrane.

The protein resides in the cell projection. It localises to the cilium. The protein localises to the flagellum membrane. Its function is as follows. Auxiliary component of the CatSper complex, a complex involved in sperm cell hyperactivation. Sperm cell hyperactivation is needed for sperm motility which is essential late in the preparation of sperm for fertilization. Required for CATSPER1 stability before intraflagellar transport and/or incorporation of the CatSper complex channel into the flagellar membrane. The protein is Cation channel sperm-associated auxiliary subunit delta of Homo sapiens (Human).